A 623-amino-acid polypeptide reads, in one-letter code: uncharacterized protein (623 aa).

Positions 28-171 constitute a GAF domain; that stretch reads TSAEVSQRVL…TIATLFAQVQ (144 aa). Residues 212 to 345 form the GGDEF domain; that stretch reads GPVAALFLDL…GGDSVAIFTA (134 aa). In terms of domain architecture, EAL spans 354-609; sequence RNDIELHLRR…AMRHMLSARR (256 aa).

This is an uncharacterized protein from Mycobacterium tuberculosis (strain CDC 1551 / Oshkosh).